We begin with the raw amino-acid sequence, 203 residues long: Inositol diphosphatase DSP3 (203 aa).

One can recognise a Tyrosine-protein phosphatase domain in the interval 20–169 (NFSMVEDGIY…FDIVSLRQCL (150 aa)). The interval 76 to 88 (FGIEGKTDPPTPM) is WPD loop important for active site topology. Cysteine 112 serves as the catalytic Phosphocysteine intermediate.

Belongs to the protein-tyrosine phosphatase family. Atypical dual-specificity phosphatase Siw14-like subfamily. Interacts with FLZ1. As to expression, highly expressed in roots, stems and flowers. Expressed at low levels in leaves and siliques.

Its subcellular location is the nucleus. It catalyses the reaction 5-diphospho-1D-myo-inositol 1,2,3,4,6-pentakisphosphate + H2O = 1D-myo-inositol hexakisphosphate + phosphate + H(+). The catalysed reaction is 1,5-bis(diphospho)-1D-myo-inositol 2,3,4,6-tetrakisphosphate + H2O = 1-diphospho-1D-myo-inositol 2,3,4,5,6-pentakisphosphate + phosphate + 2 H(+). The enzyme catalyses 3,5-bis(diphospho)-1D-myo-inositol 1,2,4,6-tetrakisphosphate + H2O = 3-diphospho-1D-myo-inositol 1,2,4,5,6-pentakisphosphate + phosphate + 2 H(+). It carries out the reaction 6-diphospho-1D-myo-inositol pentakisphosphate + H2O = 1D-myo-inositol hexakisphosphate + phosphate + H(+). Cleaves the beta-phosphate at the 5-position of soluble inositol pyrophosphates. Has highest activity on 5-diphosphoinositol 1,2,3,4,6-pentakisphosphate (5-InsP(7)), 1,5-bis-diphosphoinositol 2,3,4,6-tetrakisphosphate (1,5-InsP(8)) and 3,5-InsP(8). Possesses phosphotyrosine phosphatase activity in vitro. Dephosphorylates the phosphoinositides PI(3,5)P2. Hydrolyzes para-nitrophenyl phosphate and O-methylfluorescein phosphate in vitro. The sequence is that of Inositol diphosphatase DSP3 from Arabidopsis thaliana (Mouse-ear cress).